A 616-amino-acid chain; its full sequence is Probable Xaa-Pro aminopeptidase P (616 aa).

The Mn(2+) site is built by aspartate 413, aspartate 424, glutamate 522, and glutamate 536.

This sequence belongs to the peptidase M24B family. Mn(2+) is required as a cofactor.

The enzyme catalyses Release of any N-terminal amino acid, including proline, that is linked to proline, even from a dipeptide or tripeptide.. Functionally, catalyzes the removal of a penultimate prolyl residue from the N-termini of peptides. This is Probable Xaa-Pro aminopeptidase P (AMPP) from Paracoccidioides brasiliensis (strain Pb18).